A 143-amino-acid chain; its full sequence is Ribonuclease H (143 aa).

One can recognise an RNase H type-1 domain in the interval 1–136; the sequence is MQEIEIFCDG…CDSLAKLEAQ (136 aa). Mg(2+)-binding residues include Asp-9, Glu-47, Asp-69, and Asp-128.

It belongs to the RNase H family. As to quaternary structure, monomer. Mg(2+) is required as a cofactor.

The protein resides in the cytoplasm. The catalysed reaction is Endonucleolytic cleavage to 5'-phosphomonoester.. Its function is as follows. Endonuclease that specifically degrades the RNA of RNA-DNA hybrids. This is Ribonuclease H from Helicobacter acinonychis (strain Sheeba).